The following is a 119-amino-acid chain: NADH-quinone oxidoreductase subunit 7 (119 aa).

Helical transmembrane passes span 11–31 (LIYVGVALFIGVAALLVGALL), 59–79 (VHFYVVAMLFILFDVEVAFLW), and 88–108 (LGLYGFLGVLAFTLLLFVGFL).

This sequence belongs to the complex I subunit 3 family. NDH-1 is composed of 15 different subunits, Nqo1 to Nqo15. The complex has a L-shaped structure, with the hydrophobic arm (subunits Nqo7, Nqo8 and Nqo10 to Nqo14) embedded in the membrane and the hydrophilic peripheral arm (subunits Nqo1 to Nqo6, Nqo9 and Nqo15) protruding into the bacterial cytoplasm. The hydrophilic domain contains all the redox centers.

Its subcellular location is the cell inner membrane. It catalyses the reaction a quinone + NADH + 5 H(+)(in) = a quinol + NAD(+) + 4 H(+)(out). Its function is as follows. NDH-1 shuttles electrons from NADH, via FMN and iron-sulfur (Fe-S) centers, to quinones in the respiratory chain. The immediate electron acceptor for the enzyme in this species is menaquinone. Couples the redox reaction to proton translocation (for every two electrons transferred, four hydrogen ions are translocated across the cytoplasmic membrane), and thus conserves the redox energy in a proton gradient required for the synthesis of ATP. This Thermus thermophilus (strain ATCC 27634 / DSM 579 / HB8) protein is NADH-quinone oxidoreductase subunit 7 (nqo7).